The chain runs to 466 residues: GTPase Der (466 aa).

2 consecutive EngA-type G domains span residues 30-193 (PVVA…PEVS) and 203-376 (RRVA…ASWD). GTP is bound by residues 36–43 (GRPNVGKS), 83–87 (DTGGW), 145–148 (NKVD), 209–216 (GKPNVGKS), 256–260 (DTAGL), and 321–324 (NKWD). The 83-residue stretch at 377-459 (TRIATGPLNS…PIRINVRVRE (83 aa)) folds into the KH-like domain.

Belongs to the TRAFAC class TrmE-Era-EngA-EngB-Septin-like GTPase superfamily. EngA (Der) GTPase family. In terms of assembly, associates with the 50S ribosomal subunit.

GTPase that plays an essential role in the late steps of ribosome biogenesis. The chain is GTPase Der from Mycobacterium avium (strain 104).